The primary structure comprises 350 residues: Arginine N-succinyltransferase (350 aa).

Leu125 provides a ligand contact to succinyl-CoA. Residue His229 is the Proton donor of the active site.

Belongs to the arginine N-succinyltransferase family.

It catalyses the reaction succinyl-CoA + L-arginine = N(2)-succinyl-L-arginine + CoA + H(+). Its pathway is amino-acid degradation; L-arginine degradation via AST pathway; L-glutamate and succinate from L-arginine: step 1/5. Catalyzes the transfer of succinyl-CoA to arginine to produce N(2)-succinylarginine. The protein is Arginine N-succinyltransferase of Yersinia pseudotuberculosis serotype IB (strain PB1/+).